Here is a 70-residue protein sequence, read N- to C-terminus: MILIKKFIVAIELFIFNRNNCRYILLCTDNKVKNIQTSLSICILCAISYALIKKIQQTFQLSSKFAASCS.

It is found in the plastid. It localises to the chloroplast. This is an uncharacterized protein from Mesostigma viride (Green alga).